Reading from the N-terminus, the 421-residue chain is Tyrosine--tRNA ligase (421 aa).

Tyr35 is an L-tyrosine binding site. The short motif at 40–49 (PTGPSLHAGH) is the 'HIGH' region element. The L-tyrosine site is built by Tyr169 and Gln173. The 'KMSKS' region motif lies at 229-233 (KFGKS). Lys232 contacts ATP. The S4 RNA-binding domain maps to 354-420 (RTIVDLLIAS…GKKNFAGVKI (67 aa)).

It belongs to the class-I aminoacyl-tRNA synthetase family. TyrS type 1 subfamily. Homodimer.

Its subcellular location is the cytoplasm. The enzyme catalyses tRNA(Tyr) + L-tyrosine + ATP = L-tyrosyl-tRNA(Tyr) + AMP + diphosphate + H(+). Catalyzes the attachment of tyrosine to tRNA(Tyr) in a two-step reaction: tyrosine is first activated by ATP to form Tyr-AMP and then transferred to the acceptor end of tRNA(Tyr). The chain is Tyrosine--tRNA ligase from Corynebacterium efficiens (strain DSM 44549 / YS-314 / AJ 12310 / JCM 11189 / NBRC 100395).